Reading from the N-terminus, the 481-residue chain is Thyroid receptor-interacting protein 6 (481 aa).

Residues 1 to 12 (MSGPTWLPPKQP) show a composition bias toward pro residues. The disordered stretch occupies residues 1 to 259 (MSGPTWLPPK…QVPLSQPPEE (259 aa)). An Asymmetric dimethylarginine; alternate modification is found at Arg-25. Arg-25 bears the Omega-N-methylarginine; alternate mark. Tyr-55 bears the Phosphotyrosine; by SRC mark. Ser-92 carries the post-translational modification Phosphoserine. Basic and acidic residues predominate over residues 108-122 (DGGRGHAPRRPDRQA). The residue at position 111 (Arg-111) is an Omega-N-methylarginine. 2 stretches are compositionally biased toward low complexity: residues 153–173 (SPYG…AGPA) and 183–193 (PVRGCGPPRRG). Omega-N-methylarginine is present on residues Arg-185 and Arg-192. Phosphoserine is present on Ser-195. At Arg-211 the chain carries Omega-N-methylarginine. The segment covering 221–233 (SHREPGPGVKEEA) has biased composition (basic and acidic residues). At Arg-243 the chain carries Omega-N-methylarginine. Ser-254 carries the phosphoserine modification. 3 consecutive LIM zinc-binding domains span residues 284–321 (CGGC…QLRG), 344–403 (CSTC…FAPR), and 404–472 (CSVC…RIQE). An interaction with MAGI1 and PTPN13 region spans residues 474 to 481 (SATVTTDC).

Belongs to the zyxin/ajuba family. As to quaternary structure, specifically interacts with the ligand binding domain of the thyroid receptor (TR) in the presence of thyroid hormone. Interacts (via the third LIM domain and C-terminus) with PTPN13 (via the second PDZ domain). Interacts (via the second LIM domain or via the third LIM domain plus C-terminus) with PDLIM4 (via PDZ domain). Found in a complex with PTPN13 and PDLIM4. Interacts with SVIL isoform 2. Interacts with LPAR2 but not other LPA receptors. Interacts with PRKAA2. Interacts with MAGI1. Interacts with SCRIB. Phosphorylation at Tyr-55 by SRC is required for enhancement of lysophosphatidic acid-induced cell migration. Tyr-55 is dephosphorylated by PTPN13.

The protein localises to the cytoplasm. Its subcellular location is the cytoskeleton. The protein resides in the cell junction. It localises to the focal adhesion. It is found in the nucleus. Its function is as follows. Relays signals from the cell surface to the nucleus to weaken adherens junction and promote actin cytoskeleton reorganization and cell invasiveness. Involved in lysophosphatidic acid-induced cell adhesion and migration. Acts as a transcriptional coactivator for NF-kappa-B and JUN, and mediates the transrepression of these transcription factors induced by glucocorticoid receptor. The sequence is that of Thyroid receptor-interacting protein 6 (TRIP6) from Bos taurus (Bovine).